Consider the following 294-residue polypeptide: Glycine-rich protein 2 (294 aa).

A signal peptide spans 1–20; it reads MKMWFRLATFVTLIIEFAHC. Over residues 205-221 the composition is skewed to low complexity; sequence TGSQTGAAANGTSAGAA. Positions 205 to 225 are disordered; the sequence is TGSQTGAAANGTSAGAAVRGG.

Nacreous layer of shell (at protein level). Expressed primarily in the mantle with highest level in the mantle pallium and lower level in the mantle edge.

It is found in the secreted. The protein is Glycine-rich protein 2 of Pinctada maxima (Silver-lipped pearl oyster).